The primary structure comprises 548 residues: ATP synthase subunit alpha (548 aa).

172–179 (GDRKTGKT) serves as a coordination point for ATP. Positions 511–548 (FETTSGESVVPDENVEAMSEDDVEKESVKVRKPAPKKK) are disordered. Acidic residues predominate over residues 523–534 (ENVEAMSEDDVE).

This sequence belongs to the ATPase alpha/beta chains family. F-type ATPases have 2 components, CF(1) - the catalytic core - and CF(0) - the membrane proton channel. CF(1) has five subunits: alpha(3), beta(3), gamma(1), delta(1), epsilon(1). CF(0) has three main subunits: a(1), b(2) and c(9-12). The alpha and beta chains form an alternating ring which encloses part of the gamma chain. CF(1) is attached to CF(0) by a central stalk formed by the gamma and epsilon chains, while a peripheral stalk is formed by the delta and b chains.

The protein resides in the cell membrane. It catalyses the reaction ATP + H2O + 4 H(+)(in) = ADP + phosphate + 5 H(+)(out). Its function is as follows. Produces ATP from ADP in the presence of a proton gradient across the membrane. The alpha chain is a regulatory subunit. This is ATP synthase subunit alpha from Mycobacterium sp. (strain JLS).